The primary structure comprises 419 residues: UDP-N-acetylglucosamine 1-carboxyvinyltransferase (419 aa).

22–23 contacts phosphoenolpyruvate; that stretch reads KN. Position 92 (arginine 92) interacts with UDP-N-acetyl-alpha-D-glucosamine. Cysteine 116 acts as the Proton donor in catalysis. Cysteine 116 is modified (2-(S-cysteinyl)pyruvic acid O-phosphothioketal). UDP-N-acetyl-alpha-D-glucosamine is bound by residues aspartate 307 and valine 329.

This sequence belongs to the EPSP synthase family. MurA subfamily.

The protein resides in the cytoplasm. The catalysed reaction is phosphoenolpyruvate + UDP-N-acetyl-alpha-D-glucosamine = UDP-N-acetyl-3-O-(1-carboxyvinyl)-alpha-D-glucosamine + phosphate. The protein operates within cell wall biogenesis; peptidoglycan biosynthesis. Cell wall formation. Adds enolpyruvyl to UDP-N-acetylglucosamine. This Pseudothermotoga lettingae (strain ATCC BAA-301 / DSM 14385 / NBRC 107922 / TMO) (Thermotoga lettingae) protein is UDP-N-acetylglucosamine 1-carboxyvinyltransferase.